The following is a 188-amino-acid chain: Elongation factor P (188 aa).

Residue K34 is modified to N6-(3,6-diaminohexanoyl)-5-hydroxylysine.

The protein belongs to the elongation factor P family. Post-translationally, may be beta-lysylated on the epsilon-amino group of Lys-34 by the combined action of EpmA and EpmB, and then hydroxylated on the C5 position of the same residue by EpmC (if this protein is present). Lysylation is critical for the stimulatory effect of EF-P on peptide-bond formation. The lysylation moiety may extend toward the peptidyltransferase center and stabilize the terminal 3-CCA end of the tRNA. Hydroxylation of the C5 position on Lys-34 may allow additional potential stabilizing hydrogen-bond interactions with the P-tRNA.

The protein localises to the cytoplasm. Its pathway is protein biosynthesis; polypeptide chain elongation. Its function is as follows. Involved in peptide bond synthesis. Alleviates ribosome stalling that occurs when 3 or more consecutive Pro residues or the sequence PPG is present in a protein, possibly by augmenting the peptidyl transferase activity of the ribosome. Modification of Lys-34 is required for alleviation. The polypeptide is Elongation factor P (Hamiltonella defensa subsp. Acyrthosiphon pisum (strain 5AT)).